A 66-amino-acid polypeptide reads, in one-letter code: Large ribosomal subunit protein bL33c (66 aa).

Belongs to the bacterial ribosomal protein bL33 family.

It localises to the plastid. The protein localises to the chloroplast. The sequence is that of Large ribosomal subunit protein bL33c from Acorus calamus (Sweet flag).